Here is an 89-residue protein sequence, read N- to C-terminus: Small ribosomal subunit protein bS16c (89 aa).

This sequence belongs to the bacterial ribosomal protein bS16 family.

It localises to the plastid. The protein localises to the chloroplast. This Morus indica (Mulberry) protein is Small ribosomal subunit protein bS16c.